A 149-amino-acid chain; its full sequence is Ribonuclease pancreatic (149 aa).

The signal sequence occupies residues 1-25; the sequence is MGLEKSLILFPLLVLVLGWVQPSLA. The substrate site is built by lysine 32 and arginine 35. The active-site Proton acceptor is the histidine 37. 4 cysteine pairs are disulfide-bonded: cysteine 51–cysteine 109, cysteine 65–cysteine 120, cysteine 83–cysteine 135, and cysteine 90–cysteine 97. Residues 66–70, lysine 91, and arginine 110 contribute to the substrate site; that span reads KPVNT. Residue histidine 144 is the Proton donor of the active site.

Belongs to the pancreatic ribonuclease family. In terms of assembly, monomer. Interacts with and forms tight 1:1 complexes with RNH1. Dimerization of two such complexes may occur. Interaction with RNH1 inhibits this protein. As to expression, pancreas.

It is found in the secreted. It carries out the reaction an [RNA] containing cytidine + H2O = an [RNA]-3'-cytidine-3'-phosphate + a 5'-hydroxy-ribonucleotide-3'-[RNA].. The catalysed reaction is an [RNA] containing uridine + H2O = an [RNA]-3'-uridine-3'-phosphate + a 5'-hydroxy-ribonucleotide-3'-[RNA].. In terms of biological role, endonuclease that catalyzes the cleavage of RNA on the 3' side of pyrimidine nucleotides. Acts on single-stranded and double-stranded RNA. This Uranomys ruddi (White-bellied brush-furred rat) protein is Ribonuclease pancreatic (RNASE1).